A 388-amino-acid chain; its full sequence is Succinate--CoA ligase [ADP-forming] subunit beta (388 aa).

The 236-residue stretch at 9 to 244 folds into the ATP-grasp domain; sequence KDLLSSYDIA…PSQENVRDVL (236 aa). Residues K46, 53–55, V102, and E107 each bind ATP; that span reads GRG. Residues N199 and D213 each coordinate Mg(2+). Residues N264 and 321-323 each bind substrate; that span reads GIM.

It belongs to the succinate/malate CoA ligase beta subunit family. As to quaternary structure, heterotetramer of two alpha and two beta subunits. Mg(2+) is required as a cofactor.

The catalysed reaction is succinate + ATP + CoA = succinyl-CoA + ADP + phosphate. It carries out the reaction GTP + succinate + CoA = succinyl-CoA + GDP + phosphate. Its pathway is carbohydrate metabolism; tricarboxylic acid cycle; succinate from succinyl-CoA (ligase route): step 1/1. Succinyl-CoA synthetase functions in the citric acid cycle (TCA), coupling the hydrolysis of succinyl-CoA to the synthesis of either ATP or GTP and thus represents the only step of substrate-level phosphorylation in the TCA. The beta subunit provides nucleotide specificity of the enzyme and binds the substrate succinate, while the binding sites for coenzyme A and phosphate are found in the alpha subunit. This Chlamydia felis (strain Fe/C-56) (Chlamydophila felis) protein is Succinate--CoA ligase [ADP-forming] subunit beta.